Here is a 467-residue protein sequence, read N- to C-terminus: Prenyltransferase GME11375 (467 aa).

Glu-93 provides a ligand contact to L-tryptophan. Dimethylallyl diphosphate-binding residues include Arg-108, Lys-196, Tyr-198, Lys-266, Tyr-268, and Tyr-436.

The protein belongs to the tryptophan dimethylallyltransferase family.

The protein operates within secondary metabolite biosynthesis. Functionally, prenyltransferase; part of the gene cluster that mediates the biosynthesis of dibenzodioxocinones such as pestalotiollide B, a novel class of inhibitors against cholesterol ester transfer protein (CEPT). The biosynthesis initiates from condensation of acetate and malonate units catalyzed by the non-reducing PKS pks8/GME11356. Pks8/GME11356 lacks a thioesterase (TE) domain, which is important to the cyclizing of the third ring of atrochrysone carboxylic acid, and the esterase GME11355 might play the role of TE and catalyzes the cyclization reaction of the C ring. The lactamase-like protein GME11357 (or other beta-lactamases in Pestalotiopsis microspora) probably hydrolyzes the thioester bond between the ACP of pks8/GME11356 and the intermediate to release atrochrysone carboxylic acid, which is spontaneously dehydrates to form endocrocin anthrone. Endocrocin anthrone is further converted to emodin via the endocrocin intermediate. Emodin is then oxidized by several enzymes such as the Baeyer-Villiger oxidase GME11358, the oxidoreductase GME11367, the short chain dehydrogenase/reductase GME11373, as well as by other oxidoreductases from the cluster, to modify the A and C rings and open the B ring, and finally yield monodictyphenone. The prenyltransferase GME11375 may catalyze the addition reaction between the C5 side chains and the carbon bone of dibenzodioxocinones. The remaining biochemical reactions to the final product dibenzodioxocinones should be methylation catalyzed by methyltransferase GME11366 and reduction and lactonization reaction catalyzed by a series of oxidordeuctases. This is Prenyltransferase GME11375 from Pestalotiopsis microspora.